Reading from the N-terminus, the 269-residue chain is Hydroxyethylthiazole kinase (269 aa).

M45 is a binding site for substrate. ATP contacts are provided by R121 and T167. G194 is a substrate binding site.

It belongs to the Thz kinase family. Mg(2+) serves as cofactor.

The catalysed reaction is 5-(2-hydroxyethyl)-4-methylthiazole + ATP = 4-methyl-5-(2-phosphooxyethyl)-thiazole + ADP + H(+). Its pathway is cofactor biosynthesis; thiamine diphosphate biosynthesis; 4-methyl-5-(2-phosphoethyl)-thiazole from 5-(2-hydroxyethyl)-4-methylthiazole: step 1/1. Functionally, catalyzes the phosphorylation of the hydroxyl group of 4-methyl-5-beta-hydroxyethylthiazole (THZ). The polypeptide is Hydroxyethylthiazole kinase (Bacillus cereus (strain ATCC 14579 / DSM 31 / CCUG 7414 / JCM 2152 / NBRC 15305 / NCIMB 9373 / NCTC 2599 / NRRL B-3711)).